Here is a 287-residue protein sequence, read N- to C-terminus: Toxin zeta (287 aa).

Residue 40-47 (GQPGSGKT) participates in ATP binding. The disordered stretch occupies residues 250 to 287 (MVQNQHQETPEFKAIQQKMESLQPPTPPIPKTPKLPGI). Residues 273–287 (PPTPPIPKTPKLPGI) show a composition bias toward pro residues.

Belongs to the zeta toxin family. As to quaternary structure, in the presence of the epsilon antitoxin, forms an inactive PezA(2)PezT(2) heterotetramer.

The catalysed reaction is UDP-N-acetyl-alpha-D-glucosamine + ATP = UDP-N-acetyl-alpha-D-glucosamine 3'-phosphate + ADP + H(+). Toxic component of a type II toxin-antitoxin (TA) system. Phosphorylates UDP-N-acetyl-D-glucosamine (UNAG) on the 3'-hydroxyl group of the N-acetyl-D-glucosamine moiety, yielding UNAG-3P. UNAG-3P inhibits MurA, the first committed step in cell wall synthesis, which is then blocked. Phosphorylation is inhibited by cognate epsilon antitoxin. Part of a postsegregational killing (PSK) system involved in the killing of plasmid-free cells. The zeta toxin induces programmed cell death. This chain is Toxin zeta, found in Streptococcus agalactiae.